An 87-amino-acid polypeptide reads, in one-letter code: Putative defensin-like protein 317 (87 aa).

An N-terminal signal peptide occupies residues 1–24 (MKSFLVAFLIVLVFFCVEMKIGNG). Intrachain disulfides connect C38–C71, C47–C80, and C56–C82.

Belongs to the DEFL family.

The protein resides in the secreted. The polypeptide is Putative defensin-like protein 317 (Arabidopsis thaliana (Mouse-ear cress)).